The chain runs to 296 residues: ADP-dependent (S)-NAD(P)H-hydrate dehydratase (296 aa).

A YjeF C-terminal domain is found at Thr18–Ile292. The (6S)-NADPHX site is built by Ala53, Gly113, and His165. AMP is bound by residues Lys202 to Thr206 and Gly231. Asp232 is a binding site for (6S)-NADPHX.

This sequence belongs to the NnrD/CARKD family. In terms of assembly, homotetramer. Mg(2+) is required as a cofactor.

It carries out the reaction (6S)-NADHX + ADP = AMP + phosphate + NADH + H(+). The catalysed reaction is (6S)-NADPHX + ADP = AMP + phosphate + NADPH + H(+). Functionally, catalyzes the dehydration of the S-form of NAD(P)HX at the expense of ADP, which is converted to AMP. Together with NAD(P)HX epimerase, which catalyzes the epimerization of the S- and R-forms, the enzyme allows the repair of both epimers of NAD(P)HX, a damaged form of NAD(P)H that is a result of enzymatic or heat-dependent hydration. The chain is ADP-dependent (S)-NAD(P)H-hydrate dehydratase from Neisseria meningitidis serogroup B (strain ATCC BAA-335 / MC58).